We begin with the raw amino-acid sequence, 524 residues long: Nucleoporin NUP56 (524 aa).

Positions 1 to 219 (MADDPHNTST…SSMAKFASST (219 aa)) are disordered. Basic and acidic residues-rich tracts occupy residues 28 to 80 (VKED…EPEK), 114 to 168 (THDE…KEVE), and 179 to 199 (SAEKPKIEEKKDESKDTKVDK). Positions 37 to 44 (ARRELKQT) match the Nuclear localization signal motif. Residues 111 to 133 (KKRTHDELEQDGKEEEEKKEGEK) are a coiled coil. Residues 200 to 219 (PQTSSSAFANSSMAKFASST) are compositionally biased toward polar residues. FG repeat units lie at residues 223–224 (FG), 226–227 (FG), 237–238 (FG), 247–248 (FG), 266–267 (FG), 312–313 (FG), and 328–329 (FG). Disordered stretches follow at residues 247-284 (FGSKSADASAAPAGPPKLSFGSASAASPFASLNGQAGG) and 300-371 (GSSA…GEEK). The segment covering 248–277 (GSKSADASAAPAGPPKLSFGSASAASPFAS) has biased composition (low complexity). Acidic residues-rich tracts occupy residues 332 to 345 (ESDEEDEGEGEEGE) and 352 to 362 (GEGEEKEEEEK). Residues 345–376 (EENKSENGEGEEKEEEEKEEKASGEEKKKFKL) adopt a coiled-coil conformation. The region spanning 377-475 (QKVHIDDGEG…TPILPAMKFQ (99 aa)) is the RanBD1 domain. The stretch at 503-524 (SQANATQFSNMVEKIKEKLAAA) forms a coiled coil.

The nuclear pore complex (NPC) constitutes the exclusive means of nucleocytoplasmic transport. NPCs allow the passive diffusion of ions and small molecules and the active, nuclear transport receptor-mediated bidirectional transport of macromolecules such as proteins, RNAs, ribonucleoparticles (RNPs), and ribosomal subunits across the nuclear envelope. The 55-60 MDa NPC is composed of at least 28 different subunits: AMO1, ELYS, GLE1, GLE2, MLP1, NDC1, NIC96, NSP1, NUP133, NUP145, NUP152, NUP159, NUP170, NUP188, NUP192, NUP37, NUP49, NUP53, NUP56, NUP57, NUP82, NUP84, NUP85, POM152, POM33, POM34, SEC13 and SEH1. Due to its 8-fold rotational symmetry, all subunits are present with 8 copies or multiples thereof.

The protein localises to the nucleus. It localises to the nuclear pore complex. It is found in the nucleus membrane. Functions as a component of the nuclear pore complex (NPC). NPC components, collectively referred to as nucleoporins (NUPs), can play the role of both NPC structural components and of docking or interaction partners for transiently associated nuclear transport factors. Active directional transport is assured by both, a Phe-Gly (FG) repeat affinity gradient for these transport factors across the NPC and a transport cofactor concentration gradient across the nuclear envelope (GSP1 and GSP2 GTPases associated predominantly with GTP in the nucleus, with GDP in the cytoplasm). The chain is Nucleoporin NUP56 (NUP56) from Chaetomium thermophilum (strain DSM 1495 / CBS 144.50 / IMI 039719) (Thermochaetoides thermophila).